A 277-amino-acid polypeptide reads, in one-letter code: Shikimate dehydrogenase (NADP(+)) (277 aa).

Shikimate-binding positions include 15 to 17 and Thr-62; that span reads SLS. Lys-66 (proton acceptor) is an active-site residue. Positions 87 and 102 each coordinate shikimate. NADP(+) is bound by residues 127 to 131, 151 to 156, and Ile-219; these read GAGGA and NRTRDK. Position 221 (Tyr-221) interacts with shikimate. NADP(+) is bound at residue Gly-242.

This sequence belongs to the shikimate dehydrogenase family. In terms of assembly, homodimer.

The enzyme catalyses shikimate + NADP(+) = 3-dehydroshikimate + NADPH + H(+). It participates in metabolic intermediate biosynthesis; chorismate biosynthesis; chorismate from D-erythrose 4-phosphate and phosphoenolpyruvate: step 4/7. Its function is as follows. Involved in the biosynthesis of the chorismate, which leads to the biosynthesis of aromatic amino acids. Catalyzes the reversible NADPH linked reduction of 3-dehydroshikimate (DHSA) to yield shikimate (SA). This is Shikimate dehydrogenase (NADP(+)) from Bacillus mycoides (strain KBAB4) (Bacillus weihenstephanensis).